A 299-amino-acid chain; its full sequence is Small ribosomal subunit protein uS2 (299 aa).

The span at 259-291 shows a compositional bias: low complexity; that stretch reads AAASAAGPTSWEADGADWAASSAPAAAGESWAE. The disordered stretch occupies residues 259–299; it reads AAASAAGPTSWEADGADWAASSAPAAAGESWAETQPAEGKW.

This sequence belongs to the universal ribosomal protein uS2 family. Component of the small ribosomal subunit. Mature ribosomes consist of a small (40S) and a large (60S) subunit. The 40S subunit contains about 33 different proteins and 1 molecule of RNA (18S). The 60S subunit contains about 49 different proteins and 3 molecules of RNA (25S, 5.8S and 5S). Interacts with rps21.

It is found in the cytoplasm. Functionally, required for the assembly and/or stability of the 40S ribosomal subunit. Required for the processing of the 20S rRNA-precursor to mature 18S rRNA in a late step of the maturation of 40S ribosomal subunits. This Aspergillus flavus (strain ATCC 200026 / FGSC A1120 / IAM 13836 / NRRL 3357 / JCM 12722 / SRRC 167) protein is Small ribosomal subunit protein uS2 (rps0).